We begin with the raw amino-acid sequence, 126 residues long: Cytochrome c2 (126 aa).

Heme c is bound by residues cysteine 17, cysteine 20, histidine 21, and methionine 101.

Belongs to the cytochrome c family. In terms of processing, binds 1 heme c group covalently per subunit.

Its subcellular location is the periplasm. Functionally, cytochrome c2 is found mainly in purple, non-sulfur, photosynthetic bacteria where it functions as the electron donor to the oxidized bacteriochlorophyll in the photophosphorylation pathway. However, it may also have a role in the respiratory chain and is found in some non-photosynthetic bacteria. This Rhodovulum adriaticum (Rhodopseudomonas adriatica) protein is Cytochrome c2.